The chain runs to 197 residues: ATP-dependent Clp protease proteolytic subunit (197 aa).

Serine 98 serves as the catalytic Nucleophile. The active site involves histidine 123.

This sequence belongs to the peptidase S14 family. As to quaternary structure, fourteen ClpP subunits assemble into 2 heptameric rings which stack back to back to give a disk-like structure with a central cavity, resembling the structure of eukaryotic proteasomes.

Its subcellular location is the cytoplasm. It carries out the reaction Hydrolysis of proteins to small peptides in the presence of ATP and magnesium. alpha-casein is the usual test substrate. In the absence of ATP, only oligopeptides shorter than five residues are hydrolyzed (such as succinyl-Leu-Tyr-|-NHMec, and Leu-Tyr-Leu-|-Tyr-Trp, in which cleavage of the -Tyr-|-Leu- and -Tyr-|-Trp bonds also occurs).. In terms of biological role, cleaves peptides in various proteins in a process that requires ATP hydrolysis. Has a chymotrypsin-like activity. Plays a major role in the degradation of misfolded proteins. This Natranaerobius thermophilus (strain ATCC BAA-1301 / DSM 18059 / JW/NM-WN-LF) protein is ATP-dependent Clp protease proteolytic subunit.